The sequence spans 388 residues: Chorismate synthase (388 aa).

2 residues coordinate NADP(+): Arg39 and Arg45. Residues 130-132 (RSS), 251-252 (NA), Gly296, 311-315 (KPIPT), and Arg337 each bind FMN.

The protein belongs to the chorismate synthase family. Homotetramer. Requires FMNH2 as cofactor.

The enzyme catalyses 5-O-(1-carboxyvinyl)-3-phosphoshikimate = chorismate + phosphate. It participates in metabolic intermediate biosynthesis; chorismate biosynthesis; chorismate from D-erythrose 4-phosphate and phosphoenolpyruvate: step 7/7. Catalyzes the anti-1,4-elimination of the C-3 phosphate and the C-6 proR hydrogen from 5-enolpyruvylshikimate-3-phosphate (EPSP) to yield chorismate, which is the branch point compound that serves as the starting substrate for the three terminal pathways of aromatic amino acid biosynthesis. This reaction introduces a second double bond into the aromatic ring system. This Streptococcus sanguinis (strain SK36) protein is Chorismate synthase.